Reading from the N-terminus, the 272-residue chain is HMP-PP phosphatase (272 aa).

The active-site Nucleophile is Asp8. Mg(2+) is bound by residues Asp8, Asp10, and Asp212.

Belongs to the HAD-like hydrolase superfamily. Cof family. The cofactor is Mg(2+).

It carries out the reaction 4-amino-2-methyl-5-(diphosphooxymethyl)pyrimidine + H2O = 4-amino-2-methyl-5-(phosphooxymethyl)pyrimidine + phosphate + H(+). In terms of biological role, catalyzes the hydrolysis of 4-amino-2-methyl-5-hydroxymethylpyrimidine pyrophosphate (HMP-PP) to 4-amino-2-methyl-5-hydroxymethylpyrimidine phosphate (HMP-P). The sequence is that of HMP-PP phosphatase from Escherichia coli O81 (strain ED1a).